Here is a 686-residue protein sequence, read N- to C-terminus: Secretin GspD 2 (686 aa).

Positions 1 to 40 (MFWRDITLSVWRKKTTGLKTKKRLLPLVLAAALCSSPVWA) are cleaved as a signal peptide. Positions 41 to 140 (EEATFTANFK…VGEGSDNYAG (100 aa)) are N0, contacts GspC2. The tract at residues 142–206 (EMVTKVVPVR…EVIQRVDHAG (65 aa)) is N1. Positions 207-279 (NRTEEVIPLD…LIRRLDSEME (73 aa)) are N2. Positions 282-357 (GNSQVFYLKY…SLQSVIEQLD (76 aa)) are N3. The tract at residues 360 to 627 (RAQVHVEALI…VFIRPTILRD (268 aa)) is secretin. The cap gate stretch occupies residues 414–433 (PQKGSTVISENGATTINPDT). The tract at residues 629 to 686 (MAADGVSQRKYNYMRAEQIYRDEQGLSLMPHTAQPVLPAQNQALPPEVRAFLNAGRTR) is s domain, contacts AspS2.

Belongs to the bacterial secretin family. GSP D subfamily. Forms a cylindrical channel with 15 subunits, each of which interacts with the surrounding pilotin AspS2 proteins (also called GspS-beta). Interacts with inner cell membrane protein GspC2 in the periplasm. Forms multimers in the outer membrane. The isolated N0 domain forms dimers that self-assemble into rings.

It is found in the cell outer membrane. Its function is as follows. Part of a type II secretion system (T2SS, formerly general secretion pathway, GSP) for the export of folded proteins across the outer membrane. This subunit forms the outer membrane channel. In Escherichia coli O78:H11 (strain H10407 / ETEC), this protein is Secretin GspD 2 (gspD2).